The following is a 393-amino-acid chain: Putative mitochondrial cysteine synthase (393 aa).

Residues 12–31 (LAWRECISIASVLIGAYASY) form a helical membrane-spanning segment. Lys-86 carries the N6-(pyridoxal phosphate)lysine modification. Pyridoxal 5'-phosphate is bound by residues 230 to 234 (GTGGT) and Ser-338.

It belongs to the cysteine synthase/cystathionine beta-synthase family. The cofactor is pyridoxal 5'-phosphate.

It is found in the mitochondrion. It localises to the mitochondrion outer membrane. The catalysed reaction is O-acetyl-L-serine + hydrogen sulfide = L-cysteine + acetate. Functionally, putative cysteine synthase that catalyzes the conversion of O-acetyl-L-serine (OAS) into cysteine, the last step in the cysteine biosynthesis pathway. However, this CS-like protein is unlikely to function in cysteine biosynthesis. It seems that in S.cerevisiae cysteine biosynthesis occurs exclusively through the cystathionine pathway and not via direct incorporation of sulfur into OAS. This is Putative mitochondrial cysteine synthase from Saccharomyces cerevisiae (strain ATCC 204508 / S288c) (Baker's yeast).